A 285-amino-acid chain; its full sequence is Heterogeneous nuclear ribonucleoprotein A/B (285 aa).

Positions 1–65 (MSDAAEEQPM…NQNGAEGDQI (65 aa)) are disordered. Residues 25–43 (EGEAPVEPSAAAAAPAASA) are compositionally biased toward low complexity. RRM domains follow at residues 75–158 (GKMF…KDPV) and 159–238 (KKIF…QPKE). Residue Ser87 is modified to Phosphoserine. Residues Lys136 and Lys208 each participate in a glycyl lysine isopeptide (Lys-Gly) (interchain with G-Cter in SUMO2) cross-link. At Lys220 the chain carries N6-acetyllysine. The disordered stretch occupies residues 239-285 (VYQQQQYGSGGRGNRNRGNRGSGGGQGSTNYGKSQRRGGHQNNYKPY). Position 247 is a phosphoserine (Ser247). The residue at position 250 (Arg250) is a Dimethylated arginine; alternate. Omega-N-methylarginine; alternate is present on Arg250. 2 positions are modified to omega-N-methylarginine: Arg255 and Arg258. Lys271 carries the N6-acetyllysine modification. At Arg275 the chain carries Dimethylated arginine; alternate. Omega-N-methylarginine; alternate is present on Arg275. Residue Arg275 is modified to Asymmetric dimethylarginine; alternate.

Identified in a IGF2BP1-dependent mRNP granule complex containing untranslated mRNAs. Interacts with APOBEC1. In terms of tissue distribution, ubiquitous.

Its subcellular location is the nucleus. The protein resides in the cytoplasm. In terms of biological role, transcriptional repressor. Binds to CArG box motifs, single-stranded and double-stranded DNA, and RNA. It may be that repression by CBF-A is a result of competitive binding of CBF, a putative positive factor, and CBF-A to the same or overlapping motifs around the CArG boxes. The chain is Heterogeneous nuclear ribonucleoprotein A/B (Hnrnpab) from Mus musculus (Mouse).